We begin with the raw amino-acid sequence, 91 residues long: Small ribosomal subunit protein uS19 (91 aa).

The protein belongs to the universal ribosomal protein uS19 family.

Protein S19 forms a complex with S13 that binds strongly to the 16S ribosomal RNA. This chain is Small ribosomal subunit protein uS19, found in Synechococcus elongatus (strain ATCC 33912 / PCC 7942 / FACHB-805) (Anacystis nidulans R2).